The chain runs to 324 residues: Methyltransferase pytC (324 aa).

The protein belongs to the methyltransferase superfamily. LaeA methyltransferase family.

It participates in secondary metabolite biosynthesis. Its function is as follows. Methyltransferase; part of the gene cluster that mediates the biosynthesis of pyranterreones, a family of antioxidative compounds. The first step of pyranonigrins biosynthesis is performed by the hybrid PKS-NRPS synthetase pytA that condenses 4 malonyl-CoA units ato the acetyl starter unit by the modular PKS of pytA. The acyl chain is then connected to an L-serine through the amide bond by the modular NRPS of pytA. A tetramic acid is formed and released from the PKS-NRPS pytA to give pyranterreone 5 with the help of the thioesterase pytI. Pyranterreone 5 could be methylated by pytC to afford pyranterreone 6. Both pyranterreones 5 and 6 are subsequently oxidized by the FAD-linked oxidoreductase pytB and the cytochrome P450 monooxygenase pytD to form the fused gamma-pyrone core, resulting in pyranterreones 7 and 11, respectively. The hydroxy group at C-8 of pyranterreones 7 and 11 are dehydrated by the aspartyl protease pytH to form a delta-7 double bond to give pyranterreones 3 and 1, 2 accordingly. The exo-methylene of pyranterreone 3 could be reduced into a pendant methyl by reductase pytE to provide pyranterreone 4, also known as cordylactam. Pyranterreone 4 can be reconverted to pyranterreone 3 through pytB-catalyzed dehydrogenation or further oxidized to pyranterreones 9 and 10. This chain is Methyltransferase pytC, found in Aspergillus terreus (strain NIH 2624 / FGSC A1156).